Consider the following 179-residue polypeptide: Inosine/xanthosine triphosphatase (179 aa).

Position 8-13 (8-13) interacts with substrate; it reads TTNPAK. The Mg(2+) site is built by D38 and E68. Position 68-69 (68-69) interacts with substrate; that stretch reads EA.

This sequence belongs to the YjjX NTPase family. In terms of assembly, homodimer. The cofactor is Mg(2+). Mn(2+) serves as cofactor.

The catalysed reaction is XTP + H2O = XDP + phosphate + H(+). It catalyses the reaction ITP + H2O = IDP + phosphate + H(+). Its function is as follows. Phosphatase that hydrolyzes non-canonical purine nucleotides such as XTP and ITP to their respective diphosphate derivatives. Probably excludes non-canonical purines from DNA/RNA precursor pool, thus preventing their incorporation into DNA/RNA and avoiding chromosomal lesions. The protein is Inosine/xanthosine triphosphatase of Proteus mirabilis (strain HI4320).